The following is a 73-amino-acid chain: Excelsatoxin A (73 aa).

The N-terminal stretch at 1 to 20 (MRFALVAAITIALLVAGSVA) is a signal peptide. Positions 21–37 (DESSEDIDNIVIKTPLD) are excised as a propeptide. Disulfide bonds link Cys41–Cys58, Cys46–Cys60, and Cys54–Cys69.

Belongs to the gympietide family. As to expression, expressed in trichomes, that are stiff epidermal hairs located on the surface of petioles and leaves. Not expressed in other aerial parts.

The protein localises to the secreted. Its function is as follows. Neurotoxin certainly responsible for the defensive, persistent, and painful stings of the giant stinging tree. Inhibits inactivation of Nav1.7/SCN9A sodium channel in sensory neurons by directly interacting with TMEM233, a newly described Nav-interacting protein. Has virtually no effect on Nav1.7/SCN9A function in heterologous expression systems and in neurons that do not express TMEM233. Also weakly but significantly affects Nav1.8/SCN10A. Coexpression of TMEM233 with Nav also confers ExTxA sensitivity to Nav1.1-Nav1.6. On the Nav1.7/SCN9A channel, causes a significant hyperpolarizing shift in the voltage dependence of activation. Its effects on Nav currents are irreversible, with no apparent reduction in activity even after repeated wash steps over 30 minutes. Does not show activity on Nav1.9/SCN11A. Does not show insecticidal activities. In vivo, induces nocifensive behavior in mice (licking or biting and shaking or lifting of the affected paw) lasting for approximately 1 hour. This chain is Excelsatoxin A, found in Dendrocnide excelsa (Giant stinging tree).